The primary structure comprises 316 residues: Apolipoprotein E (316 aa).

An N-terminal signal peptide occupies residues Met1–Ala18. A run of 8 repeats spans residues Ala79–Gly100, Pro101–Gly122, Ser123–Gly144, Gln145–Leu166, Arg167–Glu188, Arg189–Ala210, Thr211–His232, and Gly233–Glu254. Positions Ala79–Glu254 are 8 X 22 AA approximate tandem repeats. Position 142 is a methionine sulfoxide (Met142). Ser146 carries the phosphoserine; by FAM20C modification. The LDL and other lipoprotein receptors binding stretch occupies residues His157–Arg167. Leu161–Arg164 is a binding site for heparin. Residues Ala209–Met289 form a lipid-binding and lipoprotein association region. A glycan (O-linked (GalNAc...) threonine) is linked at Thr211. Residue Arg228–Leu235 coordinates heparin. Residues Asn265 to His316 form a homooligomerization region. Residues Arg277–Met289 form a specificity for association with VLDL region.

This sequence belongs to the apolipoprotein A1/A4/E family. Homotetramer. May interact with ABCA1; functionally associated with ABCA1 in the biogenesis of HDLs. May interact with APP/A4 amyloid-beta peptide; the interaction is extremely stable in vitro but its physiological significance is unclear. May interact with MAPT. May interact with MAP2. In the cerebrospinal fluid, interacts with secreted SORL1. Interacts with PMEL; this allows the loading of PMEL luminal fragment on ILVs to induce fibril nucleation. Post-translationally, APOE exists as multiple glycosylated and sialylated glycoforms within cells and in plasma. The extent of glycosylation and sialylation are tissue and context specific. In terms of processing, glycated in plasma VLDL. Phosphorylated by FAM20C in the extracellular medium.

Its subcellular location is the secreted. It is found in the extracellular space. It localises to the extracellular matrix. The protein resides in the extracellular vesicle. The protein localises to the endosome. Its subcellular location is the multivesicular body. Functionally, APOE is an apolipoprotein, a protein associating with lipid particles, that mainly functions in lipoprotein-mediated lipid transport between organs via the plasma and interstitial fluids. APOE is a core component of plasma lipoproteins and is involved in their production, conversion and clearance. Apolipoproteins are amphipathic molecules that interact both with lipids of the lipoprotein particle core and the aqueous environment of the plasma. As such, APOE associates with chylomicrons, chylomicron remnants, very low density lipoproteins (VLDL) and intermediate density lipoproteins (IDL) but shows a preferential binding to high-density lipoproteins (HDL). It also binds a wide range of cellular receptors including the LDL receptor/LDLR and the very low-density lipoprotein receptor/VLDLR that mediate the cellular uptake of the APOE-containing lipoprotein particles. Finally, APOE also has a heparin-binding activity and binds heparan-sulfate proteoglycans on the surface of cells, a property that supports the capture and the receptor-mediated uptake of APOE-containing lipoproteins by cells. In Bos mutus grunniens (Wild yak), this protein is Apolipoprotein E (APOE).